We begin with the raw amino-acid sequence, 189 residues long: Inner membrane-spanning protein YciB (189 aa).

Helical transmembrane passes span 23-43 (ILLATLVLIPATLAQVAFVWW), 54-74 (ITLALVVVMGGATVIFHDAAF), 82-102 (VNWLFAFAFLVAPLFGGKTLI), 120-140 (LNLAWVAFFIALGAINVYVFK), and 150-170 (FKLFGMLGLTLLFVLGQGVYL).

Belongs to the YciB family.

Its subcellular location is the cell inner membrane. Plays a role in cell envelope biogenesis, maintenance of cell envelope integrity and membrane homeostasis. The polypeptide is Inner membrane-spanning protein YciB (Chromohalobacter salexigens (strain ATCC BAA-138 / DSM 3043 / CIP 106854 / NCIMB 13768 / 1H11)).